A 328-amino-acid chain; its full sequence is Nickel import system permease protein NikB (328 aa).

6 consecutive transmembrane segments (helical) span residues 11 to 31 (LMQM…LMKL), 104 to 124 (LLIS…LGII), 139 to 159 (VIST…LLFI), 170 to 190 (ILSQ…AYII), 229 to 249 (ILPI…GTVV), and 279 to 299 (VLFI…LTLL). One can recognise an ABC transmembrane type-1 domain in the interval 100–297 (APITLLISFS…IINTIADLLT (198 aa)).

This sequence belongs to the binding-protein-dependent transport system permease family. OppBC subfamily. As to quaternary structure, the complex is composed of two ATP-binding proteins (NikD and NikE), two transmembrane proteins (NikB and NikC) and a solute-binding protein (NikA).

It localises to the cell membrane. Functionally, part of the ABC transporter complex NikABCDE (Opp2) involved in nickel import. Probably responsible for the translocation of the substrate across the membrane. This Staphylococcus aureus (strain USA300) protein is Nickel import system permease protein NikB.